Here is a 341-residue protein sequence, read N- to C-terminus: Mitochondrial protein C2orf69 homolog (341 aa).

Residues 1–35 (MLQVVQSPHNLVFMGSIRSVVACLSLAAVARKMTA) constitute a mitochondrion transit peptide.

Belongs to the C2orf69 family.

It is found in the mitochondrion matrix. Its function is as follows. May play a role in the respiratory chain. The protein is Mitochondrial protein C2orf69 homolog of Danio rerio (Zebrafish).